The following is a 367-amino-acid chain: Mitogen-activated protein kinase 12 (367 aa).

One can recognise a Protein kinase domain in the interval 27–311; it reads YQDLQPVGSG…AAEALAHPYF (285 aa). ATP is bound by residues 33-41 and Lys56; that span reads VGSGAYGAV. The active-site Proton acceptor is Asp153. Position 183 is a phosphothreonine; by MAP2K3 and MAP2K6 (Thr183). The TXY motif lies at 183-185; it reads TGY. Tyr185 bears the Phosphotyrosine; by MAP2K3 and MAP2K6 mark.

The protein belongs to the protein kinase superfamily. CMGC Ser/Thr protein kinase family. MAP kinase subfamily. In terms of assembly, monomer. Interacts with the PDZ domain of the syntrophin SNTA1. Interacts with LIN7C, SCRIB, SYNJ2BP and SH3BP5. Interacts with PTPN4; this interaction induces the activation of PTPN4 phosphatase activity. Requires Mg(2+) as cofactor. Dually phosphorylated on Thr-183 and Tyr-185 by MAP2K3/MKK3 and MAP2K6/MKK6, which activates the enzyme. Post-translationally, ubiquitinated. Ubiquitination leads to degradation by the proteasome pathway. As to expression, highly expressed in skeletal muscle, lung and testes and also in the heart and thymus of both adult and neonatal rats.

The protein resides in the cytoplasm. It localises to the nucleus. Its subcellular location is the mitochondrion. It carries out the reaction L-seryl-[protein] + ATP = O-phospho-L-seryl-[protein] + ADP + H(+). It catalyses the reaction L-threonyl-[protein] + ATP = O-phospho-L-threonyl-[protein] + ADP + H(+). With respect to regulation, activated by phosphorylation on threonine and tyrosine. MAP2K3/MKK3 and MAP2K6/MKK6 are both essential for the activation of MAPK12 induced by environmental stress, whereas MAP2K6/MKK6 is the major MAPK12 activator in response to TNF-alpha. Serine/threonine kinase which acts as an essential component of the MAP kinase signal transduction pathway. MAPK12 is one of the four p38 MAPKs which play an important role in the cascades of cellular responses evoked by extracellular stimuli such as pro-inflammatory cytokines or physical stress leading to direct activation of transcription factors such as ELK1 and ATF2. Accordingly, p38 MAPKs phosphorylate a broad range of proteins and it has been estimated that they may have approximately 200 to 300 substrates each. Some of the targets are downstream kinases such as MAPKAPK2, which are activated through phosphorylation and further phosphorylate additional targets. Plays a role in myoblast differentiation and also in the down-regulation of cyclin D1 in response to hypoxia in adrenal cells suggesting MAPK12 may inhibit cell proliferation while promoting differentiation. Phosphorylates DLG1. Following osmotic shock, MAPK12 in the cell nucleus increases its association with nuclear DLG1, thereby causing dissociation of DLG1-SFPQ complexes. This function is independent of its catalytic activity and could affect mRNA processing and/or gene transcription to aid cell adaptation to osmolarity changes in the environment. Regulates UV-induced checkpoint signaling and repair of UV-induced DNA damage and G2 arrest after gamma-radiation exposure. MAPK12 is involved in the regulation of SLC2A1 expression and basal glucose uptake in L6 myotubes; and negatively regulates SLC2A4 expression and contraction-mediated glucose uptake in adult skeletal muscle. C-Jun (JUN) phosphorylation is stimulated by MAPK14 and inhibited by MAPK12, leading to a distinct AP-1 regulation. MAPK12 is required for the normal kinetochore localization of PLK1, prevents chromosomal instability and supports mitotic cell viability. MAPK12-signaling is also positively regulating the expansion of transient amplifying myogenic precursor cells during muscle growth and regeneration. The polypeptide is Mitogen-activated protein kinase 12 (Mapk12) (Rattus norvegicus (Rat)).